The chain runs to 1097 residues: RecBCD enzyme subunit RecC (1097 aa).

Belongs to the RecC family. In terms of assembly, heterotrimer of RecB, RecC and RecD. All subunits contribute to DNA-binding.

Its function is as follows. A helicase/nuclease that prepares dsDNA breaks (DSB) for recombinational DNA repair. Binds to DSBs and unwinds DNA via a highly rapid and processive ATP-dependent bidirectional helicase activity. Holoenzyme degrades any linearized DNA that is unable to undergo homologous recombination. In the holoenzyme this subunit recognizes the wild-type Chi sequence, and when added to isolated RecB increases its ATP-dependent helicase processivity. Unlike the case in E.coli, suppresses RecA-dependent homologous recombination, is instead required for single-strand annealing pathway repair of DSB. The chain is RecBCD enzyme subunit RecC from Mycobacterium tuberculosis (strain CDC 1551 / Oshkosh).